A 241-amino-acid polypeptide reads, in one-letter code: Eukaryotic translation initiation factor 3 subunit J (241 aa).

The segment at 1–97 (MEEDWEQLSE…EEEDMTPEQK (97 aa)) is disordered. Acidic residues predominate over residues 28–45 (GEDEEEEVKDSWEDEDEL). Residues 31-119 (EEEEVKDSWE…ESDLKNALDT (89 aa)) adopt a coiled-coil conformation. 2 stretches are compositionally biased toward basic and acidic residues: residues 46–58 (EEKKDEEKVETPK) and 69–87 (IADKEKLKQEEAERRRLEK).

It belongs to the eIF-3 subunit J family. Component of the eukaryotic translation initiation factor 3 (eIF-3) complex.

It is found in the cytoplasm. In terms of biological role, component of the eukaryotic translation initiation factor 3 (eIF-3) complex, which is involved in protein synthesis of a specialized repertoire of mRNAs and, together with other initiation factors, stimulates binding of mRNA and methionyl-tRNAi to the 40S ribosome. The eIF-3 complex specifically targets and initiates translation of a subset of mRNAs involved in cell proliferation. This Aedes aegypti (Yellowfever mosquito) protein is Eukaryotic translation initiation factor 3 subunit J.